We begin with the raw amino-acid sequence, 401 residues long: Nodulation protein E (401 aa).

The Ketosynthase family 3 (KS3) domain maps to 2–400; sequence DRRVVITGIG…GTNAVLAFRQ (399 aa). Catalysis depends on for beta-ketoacyl synthase activity residues Cys-162, His-294, and His-331. The helical transmembrane segment at 329 to 348 threads the bilayer; it reads HAHCLGAASALEMIACVMAI.

The protein belongs to the thiolase-like superfamily. Beta-ketoacyl-ACP synthases family.

Its subcellular location is the cell inner membrane. Proposed to synthesize NOD factor fatty acyl chain. Involved in the synthesis of a highly unsaturated fatty acid moiety, which forms part of a lipo-oligosaccharide that is responsible for host specificity. The sequence is that of Nodulation protein E (nodE) from Rhizobium leguminosarum bv. trifolii.